The following is a 1997-amino-acid chain: Receptor-type tyrosine-protein phosphatase beta (1997 aa).

A signal peptide spans 1–22 (MLSHGAGLALWITLSLLQTGLA). 17 consecutive Fibronectin type-III domains span residues 23 to 111 (EPER…TDPL), 112 to 207 (PPAR…SPVK), 203 to 288 (PSPV…VRTA), 291 to 378 (EVSN…TFPD), 379 to 471 (KVAN…LAVL), 467 to 552 (PLAV…KGRT), 556 to 641 (QVTD…EGRT), 642 to 729 (VPSS…QERT), 730 to 829 (VPDK…TLRN), 819 to 906 (PEPV…GFTV), 909 to 1001 (AVKN…VQGV), 995 to 1083 (PASV…EGRT), 1087 to 1175 (AVTD…VPAS), 1173 to 1260 (PASV…SRTA), 1260 to 1356 (APSP…TKPD), 1357 to 1448 (KIQN…IDRP), and 1458 to 1554 (NEKD…EMES). Residues 23–1621 (EPERCNFTLA…ESEPLFGAIE (1599 aa)) lie on the Extracellular side of the membrane. N28, N53, N75, N172, N198, N267, N321, N414, N421, N479, N544, N574, N598, N652, N721, and N829 each carry an N-linked (GlcNAc...) asparagine glycan. Residues N1040, N1096, N1163, N1185, N1212, N1274, N1367, N1470, N1474, and N1518 are each glycosylated (N-linked (GlcNAc...) asparagine). A helical transmembrane segment spans residues 1622-1642 (GVSAGLFLIGMLVAVVALLIC). At 1643 to 1997 (RQKVSHGRER…YHRDPVYSRH (355 aa)) the chain is on the cytoplasmic side. Positions 1703 to 1963 (LSKEYEELKD…VYLHQCVRDV (261 aa)) constitute a Tyrosine-protein phosphatase domain. Substrate contacts are provided by residues D1870, 1904–1910 (CSAGVGR), and Q1948. Residue C1904 is the Phosphocysteine intermediate of the active site. Y1981 is modified (phosphotyrosine).

It belongs to the protein-tyrosine phosphatase family. Receptor class 3 subfamily. Monomer. Interacts with TEK. Interacts via fibronectin type-III 17 domain with CDH5. Detected in a complex with CNTN1 and NRCAM. Interacts (phosphorylated form) with FYN and GRB2. Interacts with IGFBP2.

The protein localises to the membrane. It carries out the reaction O-phospho-L-tyrosyl-[protein] + H2O = L-tyrosyl-[protein] + phosphate. Plays an important role in blood vessel remodeling and angiogenesis. Not necessary for the initial formation of blood vessels, but is essential for their maintenance and remodeling. Can induce dephosphorylation of TEK/TIE2, CDH5/VE-cadherin and KDR/VEGFR-2. Regulates angiopoietin-TIE2 signaling in endothelial cells. Acts as a negative regulator of TIE2, and controls TIE2 driven endothelial cell proliferation, which in turn affects blood vessel remodeling during embryonic development and determines blood vessel size during perinatal growth. Essential for the maintenance of endothelial cell contact integrity and for the adhesive function of VE-cadherin in endothelial cells and this requires the presence of plakoglobin. This Homo sapiens (Human) protein is Receptor-type tyrosine-protein phosphatase beta (PTPRB).